The primary structure comprises 141 residues: Hemoglobin subunit alpha-D (141 aa).

A Globin domain is found at 1 to 141; sequence MLTAEDKKLI…VAAVLAGKYR (141 aa). Heme b is bound by residues His-58 and His-87.

This sequence belongs to the globin family. As to quaternary structure, heterotetramer of two alpha-D chains and two beta chains. As to expression, red blood cells.

Involved in oxygen transport from the lung to the various peripheral tissues. This is Hemoglobin subunit alpha-D (HBAD) from Coturnix japonica (Japanese quail).